The primary structure comprises 166 residues: NADH-quinone oxidoreductase subunit E (166 aa).

[2Fe-2S] cluster is bound by residues Cys-92, Cys-97, Cys-133, and Cys-137.

It belongs to the complex I 24 kDa subunit family. In terms of assembly, composed of 13 different subunits. Subunits NuoCD, E, F, and G constitute the peripheral sector of the complex. Requires [2Fe-2S] cluster as cofactor.

It catalyses the reaction a quinone + NADH + 5 H(+)(in) = a quinol + NAD(+) + 4 H(+)(out). Its function is as follows. NDH-1 shuttles electrons from NADH, via FMN and iron-sulfur (Fe-S) centers, to quinones in the respiratory chain. The immediate electron acceptor for the enzyme in this species is believed to be ubiquinone. Couples the redox reaction to proton translocation (for every two electrons transferred, four hydrogen ions are translocated across the cytoplasmic membrane), and thus conserves the redox energy in a proton gradient. The polypeptide is NADH-quinone oxidoreductase subunit E (nuoE) (Shigella flexneri).